The chain runs to 672 residues: Putative per-hexamer repeat protein 5 (672 aa).

7 stretches are compositionally biased toward gly residues: residues 141-161 (TGTGTGTGTGTGTGTGTGTGT), 171-191 (TDRGTGTGTGTGTGTGTGTGT), 215-233 (TGTGTGTGTGTGTGTGTDT), 243-263 (TGTGTGTGTGTGTGTGTGTGT), 273-295 (TDRGTGTGTGTGTGTGTGTGTGT), 303-355 (TGTG…GSGS), and 365-389 (TGTGTGTDTGTGTGTGTGTGTGSGS). Disordered regions lie at residues 141–193 (TGTG…GTGT) and 213–672 (TGTG…TGTA). Residues 390 to 424 (GTAKVTGTATTTATVTETGTAKVTGTDTGTAKVTG) show a composition bias toward low complexity. Over residues 425 to 469 (TGTGTGTGTGTGTGTGTGTGTGTGTGTGTGTGTGTGTGTGTGSGS) the composition is skewed to gly residues. A compositionally biased stretch (low complexity) spans 470–486 (GTAKVTGTDTGTAKVTG). Over residues 487–537 (TGTGTGTGTGTGTGTGTGTGTGTGSGSGSGSGSGSGSGTGTGTGLGSGSGS) the composition is skewed to gly residues. Residues 538–552 (GTAKVTGTGTAKVTG) are compositionally biased toward low complexity. The span at 553 to 617 (TGTGTGTGTG…GTGTGTGTGT (65 aa)) shows a compositional bias: gly residues. A compositionally biased stretch (low complexity) spans 618-636 (GTSTVTVRGTGTGTATATG). Gly residues-rich tracts occupy residues 637-653 (TGTGTGTGTGTGTGTGT) and 663-672 (RGTGTGTGTA).

This is Putative per-hexamer repeat protein 5 (Phxr5) from Mus musculus (Mouse).